The chain runs to 269 residues: Serine/arginine-rich splicing factor 5 (269 aa).

The RRM 1 domain occupies 4 to 74; sequence CRVFIGRLNP…ERVTIEHARA (71 aa). The tract at residues 73–105 is disordered; it reads RARSRGGRGRGRYSDRFSSRRPRNDRRNAPPVR. The span at 74 to 83 shows a compositional bias: basic residues; that stretch reads ARSRGGRGRG. Ser-86 is modified (phosphoserine). The region spanning 108–189 is the RRM 2 domain; it reads NRLIVENLSS…SKRHRSRSRS (82 aa). An N6-acetyllysine modification is found at Lys-167. A disordered region spans residues 174 to 269; it reads IKLIEGSKRH…SRSRSVDSGN (96 aa). Over residues 181–226 the composition is skewed to basic residues; the sequence is KRHRSRSRSRSRTRSSSRSRSRSRSRRSKSYSRSRSRSRSRSKSRS. Residues Ser-224, Ser-226, Ser-230, Ser-247, and Ser-250 each carry the phosphoserine modification. Residues 239 to 251 are compositionally biased toward low complexity; the sequence is RGSSSRSKSPASV.

The protein belongs to the splicing factor SR family. In terms of assembly, found in a pre-mRNA splicing complex with SRSF4/SFRS4, SRSF5/SFRS5, SNRNP70, SNRPA1, SRRM1 and SRRM2. Interacts with RBMY; the interaction inhibits SRSF5 pre-mRNA splicing. Interacts (via RS domain) with PHF5A (via N-terminus). In terms of processing, extensively phosphorylated on serine residues in the RS domain.

It localises to the nucleus. In terms of biological role, may be required for progression through G1 and entry into S phase of cell growth. May play a regulatory role in pre-mRNA splicing. Autoregulates its own expression. Plays a role in constitutive splicing and can modulate the selection of alternative splice sites. The sequence is that of Serine/arginine-rich splicing factor 5 (Srsf5) from Mus musculus (Mouse).